Reading from the N-terminus, the 466-residue chain is 3-isopropylmalate dehydratase large subunit (466 aa).

Positions 347, 407, and 410 each coordinate [4Fe-4S] cluster.

It belongs to the aconitase/IPM isomerase family. LeuC type 1 subfamily. As to quaternary structure, heterodimer of LeuC and LeuD. [4Fe-4S] cluster serves as cofactor.

The catalysed reaction is (2R,3S)-3-isopropylmalate = (2S)-2-isopropylmalate. It functions in the pathway amino-acid biosynthesis; L-leucine biosynthesis; L-leucine from 3-methyl-2-oxobutanoate: step 2/4. Its function is as follows. Catalyzes the isomerization between 2-isopropylmalate and 3-isopropylmalate, via the formation of 2-isopropylmaleate. The sequence is that of 3-isopropylmalate dehydratase large subunit from Vibrio vulnificus (strain YJ016).